The primary structure comprises 201 residues: UPF0301 protein RER_60040 (201 aa).

Belongs to the UPF0301 (AlgH) family.

In Rhodococcus erythropolis (strain PR4 / NBRC 100887), this protein is UPF0301 protein RER_60040.